The chain runs to 314 residues: Methionyl-tRNA formyltransferase (314 aa).

A (6S)-5,6,7,8-tetrahydrofolate-binding site is contributed by 110-113; the sequence is SLLP.

It belongs to the Fmt family.

It catalyses the reaction L-methionyl-tRNA(fMet) + (6R)-10-formyltetrahydrofolate = N-formyl-L-methionyl-tRNA(fMet) + (6S)-5,6,7,8-tetrahydrofolate + H(+). In terms of biological role, attaches a formyl group to the free amino group of methionyl-tRNA(fMet). The formyl group appears to play a dual role in the initiator identity of N-formylmethionyl-tRNA by promoting its recognition by IF2 and preventing the misappropriation of this tRNA by the elongation apparatus. In Bacillus mycoides (strain KBAB4) (Bacillus weihenstephanensis), this protein is Methionyl-tRNA formyltransferase.